The primary structure comprises 657 residues: Hemocyanin B chain (657 aa).

Cysteine 93 and cysteine 98 form a disulfide bridge. An N-linked (GlcNAc...) asparagine glycan is attached at asparagine 167. Cu cation-binding residues include histidine 194, histidine 198, histidine 224, histidine 344, histidine 348, and histidine 384. Intrachain disulfides connect cysteine 483–cysteine 502 and cysteine 562–cysteine 609.

The protein belongs to the tyrosinase family. Hemocyanin subfamily. Hexamer of a number of different chains, of which A, B, and C have been identified. Hemolymph.

It is found in the secreted. It localises to the extracellular space. Hemocyanins are copper-containing oxygen carriers occurring freely dissolved in the hemolymph of many mollusks and arthropods. The chain is Hemocyanin B chain from Panulirus interruptus (California spiny lobster).